The following is a 569-amino-acid chain: Peroxynitrite isomerase THAP4 (569 aa).

A THAP-type zinc finger spans residues 1–85 (MVICCAAVNC…LKPTAVPSIF (85 aa)). Positions 88-216 (SEKKRGAGGH…DKSGISMDDF (129 aa)) are disordered. 2 stretches are compositionally biased toward polar residues: residues 121–130 (IGSSLSSSDN) and 157–167 (AVSQEQGQSLE). A Phosphoserine modification is found at Ser-159. The HCFC1-binding motif (HBM) signature appears at 230-233 (LHSY). Residue Ser-234 is modified to Phosphoserine. A disordered region spans residues 235 to 312 (FSSKHTRERP…EAVQSEHSDA (78 aa)). Basic and acidic residues predominate over residues 242-262 (ERPSVPREPMDRKRLKREMEP). Residues 265–279 (SGNSVAQSPPSSSLT) show a composition bias toward polar residues. A compositionally biased stretch (low complexity) spans 280–289 (ATPQKASQSP). The nitrobindin stretch occupies residues 407–569 (PPKLNPVVEP…LHITYKKVTP (163 aa)). Heme b contacts are provided by Thr-436 and His-559.

It in the C-terminal section; belongs to the nitrobindin family. As to quaternary structure, homodimer. Heme b serves as cofactor.

It localises to the cytoplasm. Its subcellular location is the nucleus. The catalysed reaction is peroxynitrite = nitrate. It functions in the pathway nitrogen metabolism. Functionally, heme-binding protein able to scavenge peroxynitrite and to protect free L-tyrosine against peroxynitrite-mediated nitration, by acting as a peroxynitrite isomerase that converts peroxynitrite to nitrate. Therefore, this protein likely plays a role in peroxynitrite sensing and in the detoxification of reactive nitrogen and oxygen species (RNS and ROS, respectively). Is able to bind nitric oxide (NO) in vitro, but may act as a sensor of peroxynitrite levels in vivo, possibly modulating the transcriptional activity residing in the N-terminal region. This is Peroxynitrite isomerase THAP4 from Mus musculus (Mouse).